The chain runs to 732 residues: uncharacterized protein (732 aa).

The next 2 helical transmembrane spans lie at 687–707 (YLFP…GSDL) and 712–732 (GVKV…YYTS).

Belongs to the FadG family.

Its subcellular location is the cell membrane. This is an uncharacterized protein from Bacillus subtilis (strain 168).